The following is a 122-amino-acid chain: Basic phospholipase A2 (122 aa).

Cystine bridges form between Cys26–Cys115, Cys28–Cys44, Cys43–Cys95, Cys49–Cys122, Cys50–Cys88, Cys57–Cys81, and Cys75–Cys86. 3 residues coordinate Ca(2+): Tyr27, Gly29, and Gly31. His47 is a catalytic residue. Residue Asp48 coordinates Ca(2+). Residue Asp89 is part of the active site.

It belongs to the phospholipase A2 family. Group II subfamily. D49 sub-subfamily. The cofactor is Ca(2+). Expressed by the venom gland.

Its subcellular location is the secreted. The catalysed reaction is a 1,2-diacyl-sn-glycero-3-phosphocholine + H2O = a 1-acyl-sn-glycero-3-phosphocholine + a fatty acid + H(+). Its function is as follows. Snake venom phospholipase A2 (PLA2) that does not inhibit platelet aggregation. Exhibits cytotoxic and anticoagulant activity. Induces Ehrlich tumor growth but not angiogenesis. PLA2 catalyzes the calcium-dependent hydrolysis of the 2-acyl groups in 3-sn-phosphoglycerides. This Bothrops leucurus (Whitetail lancehead) protein is Basic phospholipase A2.